The sequence spans 327 residues: BarH-like 1 homeobox protein (327 aa).

Disordered regions lie at residues 1 to 90 (MEGS…AQSR), 113 to 181 (PYSS…PRKA), and 303 to 327 (LQGASEPPPPLPPLPGVLPRAAQPR). Positions 33 to 54 (RSPLELSPRSESSSDCSSPASP) are enriched in low complexity. A compositionally biased stretch (polar residues) spans 79–90 (QPGQLSAPAQSR). 2 stretches are compositionally biased toward basic and acidic residues: residues 133 to 143 (AGEDFRDKLDK) and 152 to 166 (SEYKVKEEGDREISS). Residues 178-237 (PRKARTAFTDHQLAQLERSFERQKYLSVQDRMELAASLNLTDTQVKTWYQNRRTKWKRQT) constitute a DNA-binding region (homeobox). Residues 308–318 (EPPPPLPPLPG) show a composition bias toward pro residues.

It belongs to the BAR homeobox family.

The protein resides in the nucleus. The sequence is that of BarH-like 1 homeobox protein (Barhl1) from Mus musculus (Mouse).